Reading from the N-terminus, the 430-residue chain is Crotonyl-CoA carboxylase/reductase (430 aa).

Belongs to the zinc-containing alcohol dehydrogenase family. Crotonyl-CoA carboxylase/reductase subfamily. As to quaternary structure, homodimer. The cofactor is Despite some sequence similarity to zinc-containing alcohol dehydrogenases, this enzyme does not bind any metals..

It catalyses the reaction (2S)-ethylmalonyl-CoA + NADP(+) = (2E)-butenoyl-CoA + CO2 + NADPH. The catalysed reaction is (S)-methylmalonyl-CoA + NADP(+) = acryloyl-CoA + CO2 + NADPH. It carries out the reaction butanoyl-CoA + NADP(+) = (2E)-butenoyl-CoA + NADPH + H(+). Its function is as follows. Catalyzes the NADPH-dependent reductive carboxylation of crotonyl-CoA ((2E)-butenoyl-CoA) to (2S)-ethylmalonyl-CoA, in the presence of CO2. This is a key reaction in the ethylmalonyl-CoA pathway for acetyl-CoA assimilation required for R.sphaeroides growth on acetate as sole carbon source. Is also able to accept acryloyl-CoA as an alternative substrate, yielding (2S)-methylmalonyl-CoA. To a lesser extent, when CO2 is absent, the enzyme also catalyzes the reduction of crotonyl-CoA to butanoyl-CoA. The chain is Crotonyl-CoA carboxylase/reductase from Cereibacter sphaeroides (strain ATCC 17023 / DSM 158 / JCM 6121 / CCUG 31486 / LMG 2827 / NBRC 12203 / NCIMB 8253 / ATH 2.4.1.) (Rhodobacter sphaeroides).